The following is a 299-amino-acid chain: MAPTSTPQTPFGRVLTAMVTPFTADGALDLDGAQRLAAHLVDAGNDGLIINGTTGESPTTSDAEKADLVRAVVEAVGDRAHVVAGVGTNNTQHSIELARAAERVGAHGLLLVTPYYNKPPQEGLYLHFTAIADAAGLPVMLYDIPGRSGVPINTETLVRLAEHPRIVANKDAKGDLGRASWAIARSGLAWYSGDDMLNLPLLAVGAVGFVSVVGHVVTPELRAMVDAHVAGDVQKALEIHQKLLPVFTGMFRTQGVMTTKGALALQGLPAGPLRAPMVGLTPEETEQLKIDLAAGGVQL.

Threonine 54 lines the pyruvate pocket. The active-site Proton donor/acceptor is the tyrosine 142. Catalysis depends on lysine 170, which acts as the Schiff-base intermediate with substrate. Valine 210 is a binding site for pyruvate.

This sequence belongs to the DapA family. Homotetramer; dimer of dimers.

The protein localises to the cytoplasm. It carries out the reaction L-aspartate 4-semialdehyde + pyruvate = (2S,4S)-4-hydroxy-2,3,4,5-tetrahydrodipicolinate + H2O + H(+). It functions in the pathway amino-acid biosynthesis; L-lysine biosynthesis via DAP pathway; (S)-tetrahydrodipicolinate from L-aspartate: step 3/4. Functionally, catalyzes the condensation of (S)-aspartate-beta-semialdehyde [(S)-ASA] and pyruvate to 4-hydroxy-tetrahydrodipicolinate (HTPA). This is 4-hydroxy-tetrahydrodipicolinate synthase 2 from Streptomyces coelicolor (strain ATCC BAA-471 / A3(2) / M145).